The following is a 510-amino-acid chain: Ferredoxin--nitrite reductase (510 aa).

[4Fe-4S] cluster contacts are provided by Cys396, Cys402, Cys437, and Cys441. Cys441 provides a ligand contact to siroheme.

It belongs to the nitrite and sulfite reductase 4Fe-4S domain family.

It catalyses the reaction 6 oxidized [2Fe-2S]-[ferredoxin] + NH4(+) + 2 H2O = nitrite + 6 reduced [2Fe-2S]-[ferredoxin] + 8 H(+). This Leptolyngbya laminosa (Phormidium laminosum) protein is Ferredoxin--nitrite reductase (nirA).